The primary structure comprises 201 residues: Adenylyl-sulfate kinase (201 aa).

Residue G35 to S42 coordinates ATP. The Phosphoserine intermediate role is filled by S109.

It belongs to the APS kinase family.

It carries out the reaction adenosine 5'-phosphosulfate + ATP = 3'-phosphoadenylyl sulfate + ADP + H(+). The protein operates within sulfur metabolism; hydrogen sulfide biosynthesis; sulfite from sulfate: step 2/3. In terms of biological role, catalyzes the synthesis of activated sulfate. The chain is Adenylyl-sulfate kinase from Salmonella typhi.